A 240-amino-acid chain; its full sequence is UDP-2,3-diacylglucosamine hydrolase (240 aa).

Mn(2+) is bound by residues D8, H10, D41, N79, and H114. 79-80 (NR) contacts substrate. D122, S160, N164, K167, and H195 together coordinate substrate. Residues H195 and H197 each contribute to the Mn(2+) site.

It belongs to the LpxH family. Mn(2+) is required as a cofactor.

It is found in the cell inner membrane. The catalysed reaction is UDP-2-N,3-O-bis[(3R)-3-hydroxytetradecanoyl]-alpha-D-glucosamine + H2O = 2-N,3-O-bis[(3R)-3-hydroxytetradecanoyl]-alpha-D-glucosaminyl 1-phosphate + UMP + 2 H(+). Its pathway is glycolipid biosynthesis; lipid IV(A) biosynthesis; lipid IV(A) from (3R)-3-hydroxytetradecanoyl-[acyl-carrier-protein] and UDP-N-acetyl-alpha-D-glucosamine: step 4/6. In terms of biological role, hydrolyzes the pyrophosphate bond of UDP-2,3-diacylglucosamine to yield 2,3-diacylglucosamine 1-phosphate (lipid X) and UMP by catalyzing the attack of water at the alpha-P atom. Involved in the biosynthesis of lipid A, a phosphorylated glycolipid that anchors the lipopolysaccharide to the outer membrane of the cell. In Salmonella dublin (strain CT_02021853), this protein is UDP-2,3-diacylglucosamine hydrolase.